The primary structure comprises 380 residues: MAPNIRKSHPLLKMINNSLIDLPSPSNISAWWNFGSLLGICLMTQILTGLLLATHYTADTTLAFSSVAHTCRNVQYGWLIRNLHANGASFFFICIYLHIGRGFYYGSYLYKETWNTGVILLLTLMATAFVGYVLPWGQMSFWGATVITNLFSAIPYIGQTLVEWAWGGFSVDNPTLTRFFALHFLLPFMIAGLTTIHLTFLHESGSNNPLGITSNCDKIPFHPYFTLKDILGFTLMLLPLTILALFSPNLLGDPENFTPANPLITPPHIKPEWYFLFAYAILRSIPNKLGGVLALAASVLILFLTPFLHKAKQRTMTFRPISQLLFWILVTNLLILTWVGSQPVEHPFIIIGQLASITYFTILLILFPITGALENKMLNY.

A run of 4 helical transmembrane segments spans residues 34-54 (FGSL…LLAT), 78-99 (WLIR…YLHI), 114-134 (WNTG…GYVL), and 179-199 (FFAL…IHLT). His84 and His98 together coordinate heme b. Heme b is bound by residues His183 and His197. A ubiquinone is bound at residue His202. 4 helical membrane-spanning segments follow: residues 227–247 (LKDI…ALFS), 289–309 (LGGV…PFLH), 321–341 (ISQL…WVGS), and 348–368 (FIII…ILFP).

The protein belongs to the cytochrome b family. In terms of assembly, the cytochrome bc1 complex contains 11 subunits: 3 respiratory subunits (MT-CYB, CYC1 and UQCRFS1), 2 core proteins (UQCRC1 and UQCRC2) and 6 low-molecular weight proteins (UQCRH/QCR6, UQCRB/QCR7, UQCRQ/QCR8, UQCR10/QCR9, UQCR11/QCR10 and a cleavage product of UQCRFS1). This cytochrome bc1 complex then forms a dimer. It depends on heme b as a cofactor.

The protein localises to the mitochondrion inner membrane. Component of the ubiquinol-cytochrome c reductase complex (complex III or cytochrome b-c1 complex) that is part of the mitochondrial respiratory chain. The b-c1 complex mediates electron transfer from ubiquinol to cytochrome c. Contributes to the generation of a proton gradient across the mitochondrial membrane that is then used for ATP synthesis. This chain is Cytochrome b (MT-CYB), found in Pelecanoides magellani (Magellanic diving petrel).